The chain runs to 495 residues: uncharacterized protein (495 aa).

In terms of domain architecture, TRAM spans 16-74 (SSKRGDLIELAVTALDEDGNGIGTHDGTNVHVIGALPDERVRARLTHVGKRHLHAEAVE). 4 residues coordinate [4Fe-4S] cluster: C88, C94, C97, and C175. Q299, Y328, E349, and N397 together coordinate S-adenosyl-L-methionine. The Nucleophile role is filled by C424. Over residues 472 to 483 (DRLESPAKERSR) the composition is skewed to basic and acidic residues. Residues 472–495 (DRLESPAKERSRPRASHKAKGGAV) form a disordered region. Basic residues predominate over residues 484-495 (PRASHKAKGGAV).

The protein belongs to the class I-like SAM-binding methyltransferase superfamily. RNA M5U methyltransferase family.

This is an uncharacterized protein from Geobacter sulfurreducens (strain ATCC 51573 / DSM 12127 / PCA).